The primary structure comprises 170 residues: ATP synthase subunit b (170 aa).

A helical membrane pass occupies residues 20–42 (QLLAMLVLLALLKKFALGPLLNI).

This sequence belongs to the ATPase B chain family. F-type ATPases have 2 components, F(1) - the catalytic core - and F(0) - the membrane proton channel. F(1) has five subunits: alpha(3), beta(3), gamma(1), delta(1), epsilon(1). F(0) has three main subunits: a(1), b(2) and c(10-14). The alpha and beta chains form an alternating ring which encloses part of the gamma chain. F(1) is attached to F(0) by a central stalk formed by the gamma and epsilon chains, while a peripheral stalk is formed by the delta and b chains.

It localises to the cell membrane. In terms of biological role, f(1)F(0) ATP synthase produces ATP from ADP in the presence of a proton or sodium gradient. F-type ATPases consist of two structural domains, F(1) containing the extramembraneous catalytic core and F(0) containing the membrane proton channel, linked together by a central stalk and a peripheral stalk. During catalysis, ATP synthesis in the catalytic domain of F(1) is coupled via a rotary mechanism of the central stalk subunits to proton translocation. Functionally, component of the F(0) channel, it forms part of the peripheral stalk, linking F(1) to F(0). This Bacillus velezensis (strain DSM 23117 / BGSC 10A6 / LMG 26770 / FZB42) (Bacillus amyloliquefaciens subsp. plantarum) protein is ATP synthase subunit b.